Reading from the N-terminus, the 463-residue chain is Probable transport protein HsrA (463 aa).

The next 14 membrane-spanning stretches (helical) occupy residues 10-30 (GLAWVAAMALFMQSLDATILN), 49-69 (MAIIAYSLAVALFIPLTAWAA), 82-102 (VFTFILGSVACAAASNLESLI), 107-127 (IQGIGGAFMMPVARLAIIQAV), 139-159 (MATAGLIGPILGPILGGWLVI), 165-185 (WIFLINIPIGALGILASGSVM), 197-217 (WTGFLLFALGLVGITLGLDLL), 225-245 (SVTYSILVVGILLLVTYCGYA), 267-287 (IIANIFIRLSASGVPFLLPLM), 298-318 (MSGWLLAPIALISVMLKILIG), 328-348 (TTLISSALLMAGSVISMAWLD), 354-374 (TWIICNLMWYGACMSIIFTSI), 393-413 (VLSIVQQVGIGFGIAVSSIIL), and 429-449 (AFSYTFLTSSLFVIALVWSLM).

Belongs to the major facilitator superfamily. EmrB family.

The protein localises to the cell inner membrane. This is Probable transport protein HsrA (hsrA) from Haemophilus influenzae (strain ATCC 51907 / DSM 11121 / KW20 / Rd).